A 556-amino-acid polypeptide reads, in one-letter code: Formate--tetrahydrofolate ligase (556 aa).

Position 65-72 (T65–S72) interacts with ATP.

The protein belongs to the formate--tetrahydrofolate ligase family.

The catalysed reaction is (6S)-5,6,7,8-tetrahydrofolate + formate + ATP = (6R)-10-formyltetrahydrofolate + ADP + phosphate. Its pathway is one-carbon metabolism; tetrahydrofolate interconversion. The polypeptide is Formate--tetrahydrofolate ligase (Streptococcus thermophilus (strain CNRZ 1066)).